Consider the following 209-residue polypeptide: Chloramphenicol acetyltransferase (209 aa).

His78 is an active-site residue.

This sequence belongs to the transferase hexapeptide repeat family.

The enzyme catalyses chloramphenicol + acetyl-CoA = chloramphenicol 3-acetate + CoA. In terms of biological role, this enzyme is an effector of chloramphenicol resistance in bacteria. This chain is Chloramphenicol acetyltransferase (cat), found in Agrobacterium fabrum (strain C58 / ATCC 33970) (Agrobacterium tumefaciens (strain C58)).